Reading from the N-terminus, the 673-residue chain is MSKPFKLNSAFKPSGDQPDAIRRLEEGLEDGLAHQTLLGVTGSGKTFTIANVIADLQRPTMVLAPNKTLAAQLYGEMKEFFPENAVEYFVSYYDYYQPEAYVPSSDTFIEKDASVNEHIEQMRLSATKALLERRDVVVVASVSAIYGLGDPDLYLKMMLHLTVGMLIDQRAILRRLAELQYTRNDQAFQRGTFRVRGEVIDIFPAESDDIALRVELFDEEVERLSLFDPLTGQVESTVPRYTIYPKTHYVTPRERILQAMEEIKDELADRRKVLLANNKLLEEQRLSQRTQFDLEMMNELGYCSGIENYSRFLSGRGPGEPPPTLFDYLPADGLLVVDESHVTIPQIGGMYRGDRARKETLVEYGFRLPSALDNRPLKFEEFEALAPQTIYVSATPGNYELEKSGDEVVDQVVRPTGLLDPIIEVRPVATQVDDLLSEIRQRAAINERVLVTTLTKRMAEDLTEYLEEHGERVRYLHSDIDTVERMEIIRDLRLGEFDVLVGINLLREGLDMPEVSLVAILDADKEGFLRSERSLIQTIGRAARNVNGKAILYGDKITPSMAKAIGETERRREKQQKYNEEHGITPQGLNKKVVDILALGQNIAKTKAKGKGKGRSTAKAGIVELDMTPKALQQKIHELEGQMMQHAQNLEFEEAAQIRDQLHQLRELFIAAS.

Positions Glu-26 to Arg-183 constitute a Helicase ATP-binding domain. Gly-39 to Thr-46 is an ATP binding site. The Beta-hairpin motif lies at Tyr-92–Val-115. A Helicase C-terminal domain is found at Gln-431–Leu-597. The 36-residue stretch at Gln-633–Leu-668 folds into the UVR domain.

This sequence belongs to the UvrB family. As to quaternary structure, forms a heterotetramer with UvrA during the search for lesions. Interacts with UvrC in an incision complex.

Its subcellular location is the cytoplasm. In terms of biological role, the UvrABC repair system catalyzes the recognition and processing of DNA lesions. A damage recognition complex composed of 2 UvrA and 2 UvrB subunits scans DNA for abnormalities. Upon binding of the UvrA(2)B(2) complex to a putative damaged site, the DNA wraps around one UvrB monomer. DNA wrap is dependent on ATP binding by UvrB and probably causes local melting of the DNA helix, facilitating insertion of UvrB beta-hairpin between the DNA strands. Then UvrB probes one DNA strand for the presence of a lesion. If a lesion is found the UvrA subunits dissociate and the UvrB-DNA preincision complex is formed. This complex is subsequently bound by UvrC and the second UvrB is released. If no lesion is found, the DNA wraps around the other UvrB subunit that will check the other stand for damage. The chain is UvrABC system protein B from Salmonella agona (strain SL483).